Here is a 409-residue protein sequence, read N- to C-terminus: Testis-expressed protein 13A (409 aa).

Positions 92–408 are required for repression of transcription; sequence WLHGFAKLHK…CGKGIWLQKP (317 aa). A disordered region spans residues 347 to 374; the sequence is GGPHRIDHQEHPRDRRYSEPHQQRPPVY. The span at 348-368 shows a compositional bias: basic and acidic residues; the sequence is GPHRIDHQEHPRDRRYSEPHQ. Residues 376–400 form a RanBP2-type zinc finger; sequence RPGDWDCPWCNAVNFSRRDTCFDCG. Residues Cys-382, Cys-385, Cys-396, and Cys-399 each contribute to the Zn(2+) site.

The protein belongs to the TEX13 family. As to quaternary structure, interacts with CNOT1; the interaction may inhibit CNOT1 binding to mRNA and subsequently CNOT1-mediated mRNA degradation. In terms of tissue distribution, testis specific.

In terms of biological role, binds to ssRNA containing the consensus sequence 5'-AGGUAA-3'. Plays a role in transcriptional repression. Required for rapid sperm motility and timely degradation of mRNA via its interaction with CNOT1. This Homo sapiens (Human) protein is Testis-expressed protein 13A.